Here is a 20-residue protein sequence, read N- to C-terminus: Brevinin-1LT (20 aa).

Cys14 and Cys20 are disulfide-bonded.

Expressed by the skin glands.

The protein localises to the secreted. Antimicrobial peptide. This is Brevinin-1LT from Rana latastei (Italian agile frog).